We begin with the raw amino-acid sequence, 115 residues long: Nucleoid-associated protein Npun_F0448 (115 aa).

It belongs to the YbaB/EbfC family. Homodimer.

It is found in the cytoplasm. The protein localises to the nucleoid. Functionally, binds to DNA and alters its conformation. May be involved in regulation of gene expression, nucleoid organization and DNA protection. The protein is Nucleoid-associated protein Npun_F0448 of Nostoc punctiforme (strain ATCC 29133 / PCC 73102).